We begin with the raw amino-acid sequence, 387 residues long: Protein RecA, chromosomal (387 aa).

Residue 80–87 (GPESSGKT) participates in ATP binding. The segment at 352–387 (EVAETTEDTSTKAKATKAKKEEKVVETEEIELELED) is disordered. Positions 378-387 (TEEIELELED) are enriched in acidic residues.

The protein belongs to the RecA family.

The protein localises to the cytoplasm. Can catalyze the hydrolysis of ATP in the presence of single-stranded DNA, the ATP-dependent uptake of single-stranded DNA by duplex DNA, and the ATP-dependent hybridization of homologous single-stranded DNAs. It interacts with LexA causing its activation and leading to its autocatalytic cleavage. The protein is Protein RecA, chromosomal of Lactococcus lactis subsp. lactis (strain IL1403) (Streptococcus lactis).